The sequence spans 134 residues: Global transcriptional regulator Spx (134 aa).

C10 and C13 are joined by a disulfide.

The protein belongs to the ArsC family. Spx subfamily. In terms of assembly, interacts with the C-terminal domain of the alpha subunit of the RNAP.

The protein resides in the cytoplasm. Functionally, global transcriptional regulator that plays a key role in stress response and exerts either positive or negative regulation of genes. Acts by interacting with the C-terminal domain of the alpha subunit of the RNA polymerase (RNAP). This interaction can enhance binding of RNAP to the promoter region of target genes and stimulate their transcription, or block interaction of RNAP with activator. The polypeptide is Global transcriptional regulator Spx (Streptococcus pyogenes serotype M3 (strain ATCC BAA-595 / MGAS315)).